The sequence spans 406 residues: Cytochrome P450 165C4 (406 aa).

C356 is a binding site for heme.

Belongs to the cytochrome P450 family. Requires heme as cofactor.

It functions in the pathway antibiotic biosynthesis; vancomycin biosynthesis. In terms of biological role, involved in the coupling of aromatic side chains of the heptapeptide of vancomycin. The polypeptide is Cytochrome P450 165C4 (cyp165C4) (Amycolatopsis orientalis (Nocardia orientalis)).